A 787-amino-acid polypeptide reads, in one-letter code: MRFAYSWLMDHLDTEWSASAVADELSRLGIEAELLHEGQDPAPFVVARVGAVKPHPSADKLKVCEVFDGADHMQVVCGASNVREGMLSVLARCGAVMPNGGPTIVEAVLRGVKSHGMLCSADELGVQGWRAQDSGILDLPSSDYEVGDSFFLSGAVIEVGVTPNRGDCLGLRGIARELVAAGVGALRPLPVADLEVFGRSPIEAEMRSAGVLMGRYIKSIKNTGDSPRWIKDRLISAGVKTISCVVDIVNYVMLVLNRPMHVYDADKIQGGKLVVGASSNTDFHALDGKKYTLSKDNLVVTDGAGVVHCIAGVIGSALSGCTLDSENIFLESAWYDPVDIAMSARKLKLSTDSSCRFERFTDPGCVKLGLDFASHMIVKYCGGVASDVVACGETPFSEGRVISFNPDSVGVIGSVEIEREEILRILTALGFDVNADKDRQWEVSVPSWRLADVRSSFDVVEEVLRMHGYDKVQEQPVVPCIAGPNGCNYDEKLSLIMLSAGLTEVVTWSFMSGAVAEKLGYSIEDLCVENPVSNKFDVMRPSLLPNLLQTAASNQACGCESVAIFELGEVYRFLDESERSICGVRSGDNVPRNPHGATRKFDFFDAKCDVLQVLTQLGIDGRLVEFRSCDRSYMHPARSADVYFRDILCGYVGELHPDLIGFFEMRSAAACFEIFLSRIPNVDDNPTGDEFLVHKYQPVKRDFAFVLDQGVQSQALVDVVGCIPGVAEVSVFDFYCGDNIPEGKVSIAVAVVMISKVGTMTESEIKDVSERIIALVAQKLGGELRAD.

The region spanning 38 to 151 is the tRNA-binding domain; that stretch reads GQDPAPFVVA…SDYEVGDSFF (114 aa). In terms of domain architecture, B5 spans 397–474; that stretch reads SEGRVISFNP…RMHGYDKVQE (78 aa). Residues D452, D458, E461, and E462 each contribute to the Mg(2+) site. Residues 694–785 form the FDX-ACB domain; the sequence is HKYQPVKRDF…VAQKLGGELR (92 aa).

It belongs to the phenylalanyl-tRNA synthetase beta subunit family. Type 1 subfamily. In terms of assembly, tetramer of two alpha and two beta subunits. It depends on Mg(2+) as a cofactor.

It localises to the cytoplasm. It carries out the reaction tRNA(Phe) + L-phenylalanine + ATP = L-phenylalanyl-tRNA(Phe) + AMP + diphosphate + H(+). This is Phenylalanine--tRNA ligase beta subunit from Anaplasma marginale (strain St. Maries).